The sequence spans 227 residues: Endonuclease V (227 aa).

2 residues coordinate Mg(2+): Asp-46 and Asp-114.

Belongs to the endonuclease V family. Mg(2+) serves as cofactor.

The protein resides in the cytoplasm. It catalyses the reaction Endonucleolytic cleavage at apurinic or apyrimidinic sites to products with a 5'-phosphate.. DNA repair enzyme involved in the repair of deaminated bases. Selectively cleaves double-stranded DNA at the second phosphodiester bond 3' to a deoxyinosine leaving behind the intact lesion on the nicked DNA. This chain is Endonuclease V, found in Alkalilimnicola ehrlichii (strain ATCC BAA-1101 / DSM 17681 / MLHE-1).